The following is a 224-amino-acid chain: UPF0758 protein VFMJ11_0123 (224 aa).

One can recognise an MPN domain in the interval 102–224 (ALTSPEHTKR…IVSFAERGWI (123 aa)). Zn(2+) is bound by residues histidine 173, histidine 175, and aspartate 186. Positions 173–186 (HNHPSGVAEPSQAD) match the JAMM motif motif.

It belongs to the UPF0758 family.

This Aliivibrio fischeri (strain MJ11) (Vibrio fischeri) protein is UPF0758 protein VFMJ11_0123.